The following is a 239-amino-acid chain: Ion-translocating oxidoreductase complex subunit E (239 aa).

Transmembrane regions (helical) follow at residues 41–61 (LGLG…VSLV), 71–91 (LPAF…LMQA), 95–115 (ELYQ…VILG), 130–150 (SFDG…LGGL), and 184–204 (GFLL…LIAL).

It belongs to the NqrDE/RnfAE family. The complex is composed of six subunits: RnfA, RnfB, RnfC, RnfD, RnfE and RnfG.

It is found in the cell inner membrane. Its function is as follows. Part of a membrane-bound complex that couples electron transfer with translocation of ions across the membrane. This is Ion-translocating oxidoreductase complex subunit E from Pseudomonas paraeruginosa (strain DSM 24068 / PA7) (Pseudomonas aeruginosa (strain PA7)).